The chain runs to 128 residues: Prokineticin-2 (128 aa).

The first 26 residues, 1 to 26, serve as a signal peptide directing secretion; the sequence is MGDPRCAPLLLLLLLPLLFTPPAGDA. Cystine bridges form between cysteine 33-cysteine 45, cysteine 39-cysteine 57, cysteine 44-cysteine 106, cysteine 67-cysteine 114, and cysteine 108-cysteine 124.

It belongs to the AVIT (prokineticin) family. In terms of tissue distribution, expressed in the SCN and among a few other discrete brain areas, including the islands of Calleja, media l preoptic area of the hypothalamus and the shell of the nucleus accumbens. Highly expressed in testis. In the SCN, expression subjected to high amplitude of circadian oscillation.

It is found in the secreted. In terms of biological role, may function as an output molecule from the suprachiasmatic nucleus (SCN) that transmits behavioral circadian rhythm. May also function locally within the SCN to synchronize output. Potently contracts gastrointestinal (GI) smooth muscle. This Mus musculus (Mouse) protein is Prokineticin-2 (Prok2).